Consider the following 206-residue polypeptide: Ras-related protein Rab-18 (206 aa).

The residue at position 1 (Met1) is an N-acetylmethionine. GTP-binding residues include Ser17, Gly20, Lys21, Ser22, Ser23, Asp34, Pro35, Thr40, Gly66, Lys123, and Asp125. Ser22 is a binding site for Mg(2+). 2 short sequence motifs (switch) span residues 31–45 (DTFDPELAATIGVDF) and 63–80 (DTAGQERFRTLTPSYYRG). Thr40 contacts Mg(2+). Residue Ser144 is modified to Phosphoserine. Ala152 serves as a coordination point for GTP. Cys199 carries S-palmitoyl cysteine lipidation. Cys203 is subject to Cysteine methyl ester. Cys203 is lipidated: S-geranylgeranyl cysteine. A propeptide spans 204–206 (SVL) (removed in mature form).

It belongs to the small GTPase superfamily. Rab family. In terms of assembly, interacts (in GTP-bound form) with ZFYVE1. Interacts with ZW10 and this interaction is enhanced in the presence of ZFYVE1. Interacts with BSCL2. The cofactor is Mg(2+).

Its subcellular location is the endoplasmic reticulum membrane. It is found in the golgi apparatus. The protein localises to the cis-Golgi network membrane. It localises to the lipid droplet. The protein resides in the apical cell membrane. It catalyses the reaction GTP + H2O = GDP + phosphate + H(+). With respect to regulation, regulated by guanine nucleotide exchange factors (GEFs) which promote the exchange of bound GDP for free GTP. Regulated by GTPase activating proteins (GAPs) which increase the GTP hydrolysis activity at the ER membrane. Inhibited by GDP dissociation inhibitors (GDIs) which prevent Rab-GDP dissociation. The small GTPases Rab are key regulators of intracellular membrane trafficking, from the formation of transport vesicles to their fusion with membranes. Rabs cycle between an inactive GDP-bound form and an active GTP-bound form that is able to recruit to membranes different sets of downstream effectors directly responsible for vesicle formation, movement, tethering and fusion. RAB18 is required for the localization of ZFYVE1 to lipid droplets and for its function in mediating the formation of endoplasmic reticulum-lipid droplets (ER-LD) contacts. Also required for maintaining endoplasmic reticulum structure. Plays a role in apical endocytosis/recycling. Plays a key role in eye and brain development and neurodegeneration. This is Ras-related protein Rab-18 (RAB18) from Bos taurus (Bovine).